A 231-amino-acid polypeptide reads, in one-letter code: Tol-Pal system protein TolQ (231 aa).

3 consecutive transmembrane segments (helical) span residues 20–40, 134–154, and 176–196; these read IVVQ…WIMI, FLAT…VWGI, and IAEA…AVIA.

This sequence belongs to the ExbB/TolQ family. In terms of assembly, the Tol-Pal system is composed of five core proteins: the inner membrane proteins TolA, TolQ and TolR, the periplasmic protein TolB and the outer membrane protein Pal. They form a network linking the inner and outer membranes and the peptidoglycan layer.

It is found in the cell inner membrane. Functionally, part of the Tol-Pal system, which plays a role in outer membrane invagination during cell division and is important for maintaining outer membrane integrity. This is Tol-Pal system protein TolQ from Pseudomonas aeruginosa (strain ATCC 15692 / DSM 22644 / CIP 104116 / JCM 14847 / LMG 12228 / 1C / PRS 101 / PAO1).